A 266-amino-acid polypeptide reads, in one-letter code: Tryptophan synthase alpha chain (266 aa).

Residues glutamate 49 and aspartate 60 each act as proton acceptor in the active site.

Belongs to the TrpA family. In terms of assembly, tetramer of two alpha and two beta chains.

It catalyses the reaction (1S,2R)-1-C-(indol-3-yl)glycerol 3-phosphate + L-serine = D-glyceraldehyde 3-phosphate + L-tryptophan + H2O. The protein operates within amino-acid biosynthesis; L-tryptophan biosynthesis; L-tryptophan from chorismate: step 5/5. In terms of biological role, the alpha subunit is responsible for the aldol cleavage of indoleglycerol phosphate to indole and glyceraldehyde 3-phosphate. In Thioalkalivibrio sulfidiphilus (strain HL-EbGR7), this protein is Tryptophan synthase alpha chain.